The chain runs to 115 residues: MNLMLVLLINTTISLVLVTIAFWLPQLNIYSEKSSPYECGFDPMGSARLPFSMKFFLVAITFLLFDLEIALLLPLPWAAQFNNLNLVLIMALMLISILALGLAYEWIQKGLEWVE.

A run of 3 helical transmembrane segments spans residues 3–23 (LMLV…IAFW), 55–75 (FFLV…LLPL), and 87–107 (VLIM…YEWI).

This sequence belongs to the complex I subunit 3 family. As to quaternary structure, core subunit of respiratory chain NADH dehydrogenase (Complex I) which is composed of 45 different subunits. Interacts with TMEM186. Interacts with TMEM242.

The protein resides in the mitochondrion inner membrane. It carries out the reaction a ubiquinone + NADH + 5 H(+)(in) = a ubiquinol + NAD(+) + 4 H(+)(out). Core subunit of the mitochondrial membrane respiratory chain NADH dehydrogenase (Complex I) which catalyzes electron transfer from NADH through the respiratory chain, using ubiquinone as an electron acceptor. Essential for the catalytic activity of complex I. The protein is NADH-ubiquinone oxidoreductase chain 3 of Oryctolagus cuniculus (Rabbit).